The sequence spans 173 residues: Shikimate kinase 1 (173 aa).

14 to 19 serves as a coordination point for ATP; sequence GAGKST. S18 contributes to the Mg(2+) binding site. Substrate is bound by residues D36, R60, and G82. R120 serves as a coordination point for ATP. R140 is a binding site for substrate. Position 157 (Q157) interacts with ATP.

It belongs to the shikimate kinase family. Monomer. It depends on Mg(2+) as a cofactor.

It localises to the cytoplasm. It catalyses the reaction shikimate + ATP = 3-phosphoshikimate + ADP + H(+). It functions in the pathway metabolic intermediate biosynthesis; chorismate biosynthesis; chorismate from D-erythrose 4-phosphate and phosphoenolpyruvate: step 5/7. Functionally, catalyzes the specific phosphorylation of the 3-hydroxyl group of shikimic acid using ATP as a cosubstrate. The chain is Shikimate kinase 1 from Serratia proteamaculans (strain 568).